The sequence spans 309 residues: High-affinity zinc uptake system protein AztC (309 aa).

The N-terminal stretch at 1-24 is a signal peptide; it reads MKDWLFRIATCSIMTFSSLAAAQA. Position 61 (His61) interacts with Zn(2+). The interval 117–132 is D-loop; the sequence is GGGHYHYIDGKAVFHA. His138 serves as a coordination point for Zn(2+). The cysteines at positions 158 and 165 are disulfide-linked. His204 is a binding site for Zn(2+). The Z-loop stretch occupies residues 222–229; sequence QGVSTESE. Zn(2+) is bound at residue Asp279.

It belongs to the bacterial solute-binding protein 9 family. As to quaternary structure, monomer.

The protein resides in the periplasm. Functionally, part of the ATP-binding cassette (ABC) transport system AztABCD involved in zinc import. Binds zinc with high affinity and specificity and delivers it to the membrane permease for translocation into the cytoplasm. The protein is High-affinity zinc uptake system protein AztC of Paracoccus denitrificans (strain Pd 1222).